The primary structure comprises 185 residues: Ribosome-recycling factor (185 aa).

The interval 135 to 159 is disordered; sequence ANDKLKASEKNKEASEDEVKRAQEK.

This sequence belongs to the RRF family.

It is found in the cytoplasm. Functionally, responsible for the release of ribosomes from messenger RNA at the termination of protein biosynthesis. May increase the efficiency of translation by recycling ribosomes from one round of translation to another. The sequence is that of Ribosome-recycling factor from Moorella thermoacetica (strain ATCC 39073 / JCM 9320).